Reading from the N-terminus, the 515-residue chain is Protein FAM98A (515 aa).

Disordered stretches follow at residues 297–411 (VLMG…YHGG) and 432–515 (SGYQ…HYTS). Positions 302–311 (VPDRGGRPNE) are enriched in basic and acidic residues. Residues 382–395 (WTDGGSASGGGYQD) show a composition bias toward gly residues. The span at 444-456 (RYQDGGHHGERGS) shows a compositional bias: basic and acidic residues. Positions 457 to 481 (GRGGRGGRGGRGGRGSQGGGWGGRG) are enriched in gly residues. A compositionally biased stretch (low complexity) spans 485-501 (YHQGGQFEQHFQHGGYQ). Positions 502-515 (YSHSGFGQGRHYTS) are enriched in polar residues.

Belongs to the FAM98 family. In terms of assembly, interacts (via N- and C-terminus) with DDX1. Interacts (via N- and C-terminus) with C14orf166. Interacts with FAM98B. Interacts with PLEKHM1 (via N- and C-terminus).

Positively stimulates PRMT1-induced protein arginine methylation. Involved in skeletal homeostasis. Positively regulates lysosome peripheral distribution and ruffled border formation in osteoclasts. In Rattus norvegicus (Rat), this protein is Protein FAM98A.